We begin with the raw amino-acid sequence, 81 residues long: DNA-directed RNA polymerase subunit Rpo6 (81 aa).

It belongs to the archaeal Rpo6/eukaryotic RPB6 RNA polymerase subunit family. Part of the RNA polymerase complex.

Its subcellular location is the cytoplasm. The enzyme catalyses RNA(n) + a ribonucleoside 5'-triphosphate = RNA(n+1) + diphosphate. DNA-dependent RNA polymerase (RNAP) catalyzes the transcription of DNA into RNA using the four ribonucleoside triphosphates as substrates. The chain is DNA-directed RNA polymerase subunit Rpo6 from Thermofilum pendens (strain DSM 2475 / Hrk 5).